Consider the following 176-residue polypeptide: Dynein light chain Tctex-type 5-B (176 aa).

This sequence belongs to the dynein light chain Tctex-type family.

The sequence is that of Dynein light chain Tctex-type 5-B (Dynlt5-b) from Xenopus laevis (African clawed frog).